We begin with the raw amino-acid sequence, 223 residues long: Peptidyl-prolyl cis-trans isomerase, mitochondrial (223 aa).

Residues 1–44 (MFGPRHFSVLKTTGSLVSSTFSSSLKPTATFSCARAFSQTSSIM) constitute a mitochondrion transit peptide. The 161-residue stretch at 62–222 (NKPTSEIKAQ…KKPTIVDCGA (161 aa)) folds into the PPIase cyclophilin-type domain.

Belongs to the cyclophilin-type PPIase family.

It is found in the mitochondrion. It localises to the cytoplasm. The catalysed reaction is [protein]-peptidylproline (omega=180) = [protein]-peptidylproline (omega=0). Its activity is regulated as follows. Binds cyclosporin A (CsA). CsA mediates some of its effects via an inhibitory action on PPIase. In terms of biological role, PPIases accelerate the folding of proteins. It catalyzes the cis-trans isomerization of proline imidic peptide bonds in oligopeptides. In Neurospora crassa (strain ATCC 24698 / 74-OR23-1A / CBS 708.71 / DSM 1257 / FGSC 987), this protein is Peptidyl-prolyl cis-trans isomerase, mitochondrial (csr-1).